The chain runs to 280 residues: Acetylglutamate kinase (280 aa).

Residues 57 to 58 (GG), arginine 79, and asparagine 174 each bind substrate.

The protein belongs to the acetylglutamate kinase family. ArgB subfamily.

It is found in the cytoplasm. The catalysed reaction is N-acetyl-L-glutamate + ATP = N-acetyl-L-glutamyl 5-phosphate + ADP. The protein operates within amino-acid biosynthesis; L-arginine biosynthesis; N(2)-acetyl-L-ornithine from L-glutamate: step 2/4. In terms of biological role, catalyzes the ATP-dependent phosphorylation of N-acetyl-L-glutamate. The chain is Acetylglutamate kinase from Helicobacter hepaticus (strain ATCC 51449 / 3B1).